Here is a 419-residue protein sequence, read N- to C-terminus: MSPSAITESPRNSVVDHTSGLQVDSLAVQGPFPSFHGYDHVTWWVGNAKQAASYYNTLFGMKIIAYRGLETGSRYFASYLVGKEDVRFVFTSPIRSHVHLPEDEPISDEDRALLKEMHAHLEKHGDAVKDVCFEVDNVQGVYERAVQQGAVSIAPPKTLSDKEHGSVTMAVIQTYGDTTHTLLSRDNFRGTFLPGFRDVNRQPAAYSALAPVPLQRIDHCVGNQDWDDMRAACDFYERCLSFHRFWSVDDNQISTDFSALNSIVMASPNNVVKMPINEPAKGKKRSQIEEYVTFNSGAGVQHIALLTSDIITTVEAMRSRGVEFIEVPHTYYDTMRRRLKTEKRDWELQEDFDRLVRNNILIDYDEGGYLLQLFTRPLMDRPTVFIEIIQRNEFDGFGAGNFKSLFEAIEREQAERGNL.

VOC domains lie at 37–185 and 216–376; these read GYDH…LLSR and RIDH…LFTR. The Fe cation site is built by His-219, His-302, and Glu-387.

It belongs to the 4HPPD family. The cofactor is Fe cation.

It carries out the reaction 3-(4-hydroxyphenyl)pyruvate + O2 = homogentisate + CO2. The protein operates within amino-acid degradation; L-phenylalanine degradation; acetoacetate and fumarate from L-phenylalanine: step 3/6. This is 4-hydroxyphenylpyruvate dioxygenase (HPD4) from Pyricularia oryzae (strain 70-15 / ATCC MYA-4617 / FGSC 8958) (Rice blast fungus).